The primary structure comprises 342 residues: Ribosomal RNA small subunit methyltransferase C (342 aa).

It belongs to the methyltransferase superfamily. RsmC family. In terms of assembly, monomer.

It is found in the cytoplasm. The enzyme catalyses guanosine(1207) in 16S rRNA + S-adenosyl-L-methionine = N(2)-methylguanosine(1207) in 16S rRNA + S-adenosyl-L-homocysteine + H(+). Its function is as follows. Specifically methylates the guanine in position 1207 of 16S rRNA in the 30S particle. The sequence is that of Ribosomal RNA small subunit methyltransferase C from Shewanella oneidensis (strain ATCC 700550 / JCM 31522 / CIP 106686 / LMG 19005 / NCIMB 14063 / MR-1).